The chain runs to 299 residues: 4-hydroxy-3-methylbut-2-enyl diphosphate reductase (299 aa).

[4Fe-4S] cluster is bound at residue Cys-12. 2 residues coordinate (2E)-4-hydroxy-3-methylbut-2-enyl diphosphate: His-42 and His-88. 2 residues coordinate dimethylallyl diphosphate: His-42 and His-88. Isopentenyl diphosphate is bound by residues His-42 and His-88. [4Fe-4S] cluster is bound at residue Cys-110. Residue His-138 coordinates (2E)-4-hydroxy-3-methylbut-2-enyl diphosphate. His-138 contacts dimethylallyl diphosphate. Residue His-138 coordinates isopentenyl diphosphate. The active-site Proton donor is the Glu-140. Thr-177 is a binding site for (2E)-4-hydroxy-3-methylbut-2-enyl diphosphate. Cys-205 is a [4Fe-4S] cluster binding site. Residues Ser-233, Asn-235, and Ser-277 each contribute to the (2E)-4-hydroxy-3-methylbut-2-enyl diphosphate site. Dimethylallyl diphosphate contacts are provided by Ser-233, Asn-235, and Ser-277. Residues Ser-233, Asn-235, and Ser-277 each coordinate isopentenyl diphosphate.

The protein belongs to the IspH family. It depends on [4Fe-4S] cluster as a cofactor.

It catalyses the reaction isopentenyl diphosphate + 2 oxidized [2Fe-2S]-[ferredoxin] + H2O = (2E)-4-hydroxy-3-methylbut-2-enyl diphosphate + 2 reduced [2Fe-2S]-[ferredoxin] + 2 H(+). It carries out the reaction dimethylallyl diphosphate + 2 oxidized [2Fe-2S]-[ferredoxin] + H2O = (2E)-4-hydroxy-3-methylbut-2-enyl diphosphate + 2 reduced [2Fe-2S]-[ferredoxin] + 2 H(+). The protein operates within isoprenoid biosynthesis; dimethylallyl diphosphate biosynthesis; dimethylallyl diphosphate from (2E)-4-hydroxy-3-methylbutenyl diphosphate: step 1/1. It functions in the pathway isoprenoid biosynthesis; isopentenyl diphosphate biosynthesis via DXP pathway; isopentenyl diphosphate from 1-deoxy-D-xylulose 5-phosphate: step 6/6. Catalyzes the conversion of 1-hydroxy-2-methyl-2-(E)-butenyl 4-diphosphate (HMBPP) into a mixture of isopentenyl diphosphate (IPP) and dimethylallyl diphosphate (DMAPP). Acts in the terminal step of the DOXP/MEP pathway for isoprenoid precursor biosynthesis. This chain is 4-hydroxy-3-methylbut-2-enyl diphosphate reductase, found in Malacoplasma penetrans (strain HF-2) (Mycoplasma penetrans).